The following is a 557-amino-acid chain: Chaperonin GroEL 1 (557 aa).

ATP-binding positions include 29 to 32 (TLGP), Lys50, 86 to 90 (DGTTT), Gly416, and Asp495.

It belongs to the chaperonin (HSP60) family. Forms a cylinder of 14 subunits composed of two heptameric rings stacked back-to-back. Interacts with the co-chaperonin GroES.

The protein localises to the cytoplasm. It carries out the reaction ATP + H2O + a folded polypeptide = ADP + phosphate + an unfolded polypeptide.. In terms of biological role, together with its co-chaperonin GroES, plays an essential role in assisting protein folding. The GroEL-GroES system forms a nano-cage that allows encapsulation of the non-native substrate proteins and provides a physical environment optimized to promote and accelerate protein folding. This is Chaperonin GroEL 1 from Protochlamydia amoebophila (strain UWE25).